A 123-amino-acid chain; its full sequence is Potassium voltage-gated channel subfamily E member 2 (123 aa).

Residues Asn6 and Asn29 are each glycosylated (N-linked (GlcNAc...) asparagine). The chain crosses the membrane as a helical span at residues 49-69; sequence VILYLMVMIGMFSFIVVAILV. Over 70–123 the chain is Cytoplasmic; it reads STVKSKRREHSQHPYHQYIVEDWQEKYKSQILHLEDSKATIHENMGATGFTVSP.

This sequence belongs to the potassium channel KCNE family. As to quaternary structure, interacts with KCNB1. Associates with KCNH2/ERG1. May associate with KCNQ2 and KCNQ3. Associates with HCN1 and probably HCN2. Heteromultimer with KCNC2. Interacts with KCNC2. Interacts with KCNQ1. Forms a heterooligomer complex with KCNQ1 that targets to the membrane raft and leading to currents with an apparently instantaneous activation, a rapid deactivation process and a linear current-voltage relationship and decreases the amplitude of the outward current.

The protein resides in the cell membrane. Its subcellular location is the apical cell membrane. Ancillary protein that functions as a regulatory subunit of the voltage-gated potassium (Kv) channel complex composed of pore-forming and potassium-conducting alpha subunits and of regulatory beta subunits. KCNE2 beta subunit modulates the gating kinetics and enhances stability of the channel complex. Alters the gating of the delayed rectifier Kv channel containing KCNB1 alpha subunit. Associates with KCNH2/HERG alpha subunit Kv channel to form the rapidly activating component of the delayed rectifying potassium current (IKr) in heart. May associate with KCNQ2 and/or KCNQ3 alpha subunits to modulate the native M-type current. May associate with HCN1 and HCN2 channel subunits to increase potassium current. Forms a heterooligomer complex with KCNQ1/KVLQT1 alpha subunits which leads to currents with an apparently instantaneous activation, a rapid deactivation process and a linear current-voltage relationship and decreases the amplitude of the outward current. KCNQ1-KCNE2 channel associates with Na(+)-coupled myo-inositol symporter in the apical membrane of choroid plexus epithelium and regulates the myo-inositol gradient between blood and cerebrospinal fluid with an impact on neuron excitability. The protein is Potassium voltage-gated channel subfamily E member 2 of Mus musculus (Mouse).